Here is a 256-residue protein sequence, read N- to C-terminus: Probable histidine-binding protein (256 aa).

The N-terminal stretch at 1–19 (MKKFLTAFLVAFTGLFLVA) is a signal peptide. Cys20 is lipidated: N-palmitoyl cysteine. A lipid anchor (S-diacylglycerol cysteine) is attached at Cys20.

The protein belongs to the bacterial solute-binding protein 3 family.

Its subcellular location is the cell membrane. Functionally, involved in histidine transport. The sequence is that of Probable histidine-binding protein (hisJ) from Campylobacter jejuni subsp. jejuni serotype O:2 (strain ATCC 700819 / NCTC 11168).